Here is a 102-residue protein sequence, read N- to C-terminus: Circadian clock protein KaiB3 (102 aa).

This sequence belongs to the KaiB family. As to quaternary structure, purifies as a monomer and homotetramer. Interacts with KaiC1 and KaiC3.

Its function is as follows. A paralog of KaiB1, the major clock oscillator protein in this species. KaiB3 and KaiC3 may cross talk with the core oscillator. The monomer reduces the ATPase activity of KaiC3 by 55%, the homotetramer has no effect. A metamorphic protein which may reversibly switch between an inactive tetrameric fold and a rare thioredoxin-like monomeric fold (KaiB(fs)). This is Circadian clock protein KaiB3 from Synechocystis sp. (strain ATCC 27184 / PCC 6803 / Kazusa).